The sequence spans 431 residues: Glucose-6-phosphate isomerase (431 aa).

Glutamate 284 serves as the catalytic Proton donor. Residues histidine 305 and lysine 420 contribute to the active site.

Belongs to the GPI family.

The protein localises to the cytoplasm. The enzyme catalyses alpha-D-glucose 6-phosphate = beta-D-fructose 6-phosphate. It participates in carbohydrate biosynthesis; gluconeogenesis. It functions in the pathway carbohydrate degradation; glycolysis; D-glyceraldehyde 3-phosphate and glycerone phosphate from D-glucose: step 2/4. Catalyzes the reversible isomerization of glucose-6-phosphate to fructose-6-phosphate. The chain is Glucose-6-phosphate isomerase from Mycoplasma genitalium (strain ATCC 33530 / DSM 19775 / NCTC 10195 / G37) (Mycoplasmoides genitalium).